A 199-amino-acid chain; its full sequence is Prolactin-1 (199 aa).

3 disulfides stabilise this stretch: C4–C11, C58–C174, and C191–C199. N60 is a glycosylation site (N-linked (GlcNAc...) asparagine).

It belongs to the somatotropin/prolactin family. Post-translationally, glycosylated.

It localises to the secreted. The chain is Prolactin-1 from Alligator mississippiensis (American alligator).